We begin with the raw amino-acid sequence, 326 residues long: Probable fructokinase-4 (326 aa).

This sequence belongs to the carbohydrate kinase PfkB family.

It carries out the reaction D-fructose + ATP = D-fructose 6-phosphate + ADP + H(+). It participates in glycan biosynthesis; starch biosynthesis. Functionally, may play an important role in maintaining the flux of carbon towards starch formation. This is Probable fructokinase-4 from Arabidopsis thaliana (Mouse-ear cress).